The sequence spans 305 residues: D-alanine--D-alanine ligase (305 aa).

One can recognise an ATP-grasp domain in the interval 107 to 299 (KVIFASAGLK…FGELVLRILQ (193 aa)). Residue 134-185 (PLPVVVKPSREGSSVGVGIVRDPSRMQAALDEAFRYDSEILIEGFIDGREVQ) coordinates ATP. Mg(2+) is bound by residues aspartate 253, glutamate 266, and asparagine 268.

This sequence belongs to the D-alanine--D-alanine ligase family. It depends on Mg(2+) as a cofactor. Requires Mn(2+) as cofactor.

The protein localises to the cytoplasm. It carries out the reaction 2 D-alanine + ATP = D-alanyl-D-alanine + ADP + phosphate + H(+). It participates in cell wall biogenesis; peptidoglycan biosynthesis. In terms of biological role, cell wall formation. In Citrifermentans bemidjiense (strain ATCC BAA-1014 / DSM 16622 / JCM 12645 / Bem) (Geobacter bemidjiensis), this protein is D-alanine--D-alanine ligase.